The chain runs to 44 residues: Small ribosomal subunit protein eS7 (44 aa).

Residues 18–34 (KPTRKSRIKNKQKRPRS) show a composition bias toward basic residues. The interval 18 to 44 (KPTRKSRIKNKQKRPRSRTLTAVHDAI) is disordered.

Belongs to the eukaryotic ribosomal protein eS7 family. As to quaternary structure, component of the small ribosomal subunit.

The protein resides in the cytoplasm. It localises to the cytoskeleton. It is found in the microtubule organizing center. Its subcellular location is the centrosome. The protein localises to the nucleus. Its function is as follows. Component of the small ribosomal subunit. The ribosome is a large ribonucleoprotein complex responsible for the synthesis of proteins in the cell. Required for rRNA maturation. This Salmo salar (Atlantic salmon) protein is Small ribosomal subunit protein eS7 (rps7).